A 636-amino-acid chain; its full sequence is MVQASSHAESGHEGKQGASRSVGLLVAAVGVVYGDIGTSPLYTLKEVFTGGYGVSVNHDGVLGILSLILWSLLWVVSFKYVMFILRADNQGEGGTMALTALARRATAAYPRLRTLMVICGLIGASLFYGDSMITPAVSVLSAVEGVGLAFDGIDHWVVPISLVVLVALFLVQRHGTEKIGKLFGPIMVTWFLALGALGVHGISQSPEVLKAFNPAWAVNFFVVHPGIGVAILGAVVLALTGAEALYADMGHFGRKPIARAWFILVLPALVLNYFGQGALLLQNPEAARNPFYLLAPGWALLPLVGLATMATVIASQAVISGAFSLTRQAIQLGYIPRMQIQHTSSDEQGQIYIGAVNWTLMVGVVLLVIGFESSGALAAAYGVAVTGTMLITTVLVSAVMLLLWKWPPLLAVPILVGFLLVDGLFFAANVPKIAQGGAFPVLAGGVLYLLMSTWKRGKQILVERIDEGALPLPLFISSIRIQPPHRVEGTAVFLTARSDAVPHALLHNMLHNQVLHSQVVLLTVVSEDRPRVPEHERFEVEAYGDGFFRVLLHFGFMDEPDVPAALKLCHLDGLDFTPMRTTYFLSRETVIASRLEGMSRWRGNLFAFLLKNANGNLRFFNLPLNRVIELGTQVEI.

The next 12 membrane-spanning stretches (helical) occupy residues valine 22–tyrosine 42, isoleucine 64–isoleucine 84, leucine 115–proline 135, phenylalanine 150–leucine 170, leucine 182–isoleucine 202, phenylalanine 220–threonine 240, tryptophan 261–leucine 281, leucine 293–isoleucine 313, isoleucine 351–phenylalanine 371, valine 383–leucine 403, proline 408–alanine 428, and isoleucine 433–threonine 453.

The protein belongs to the HAK/KUP transporter (TC 2.A.72) family.

The protein localises to the cell inner membrane. It carries out the reaction K(+)(in) + H(+)(in) = K(+)(out) + H(+)(out). Its function is as follows. Transport of potassium into the cell. Likely operates as a K(+):H(+) symporter. This chain is Probable potassium transport system protein Kup, found in Pseudomonas putida (strain ATCC 47054 / DSM 6125 / CFBP 8728 / NCIMB 11950 / KT2440).